The sequence spans 22 residues: Myofibril-bound serine protease (22 aa).

One can recognise a Peptidase S1 domain in the interval Ile-1–Tyr-22.

Belongs to the peptidase S1 family. Detected in skeletal muscle (at protein level).

The protein localises to the cytoplasm. In terms of biological role, serine protease which degrades the myosin heavy chain and tropomyosin, but not actin. Selectively cleaves Arg-|-Xaa bonds. The chain is Myofibril-bound serine protease from Saurida undosquamis (Brushtooth lizardfish).